We begin with the raw amino-acid sequence, 141 residues long: Phosphoribosyl-AMP cyclohydrolase (141 aa).

Position 88 (Asp88) interacts with Mg(2+). Cys89 lines the Zn(2+) pocket. Positions 90 and 92 each coordinate Mg(2+). Zn(2+) is bound by residues Cys109 and Cys116.

The protein belongs to the PRA-CH family. As to quaternary structure, homodimer. Mg(2+) serves as cofactor. Requires Zn(2+) as cofactor.

Its subcellular location is the cytoplasm. It catalyses the reaction 1-(5-phospho-beta-D-ribosyl)-5'-AMP + H2O = 1-(5-phospho-beta-D-ribosyl)-5-[(5-phospho-beta-D-ribosylamino)methylideneamino]imidazole-4-carboxamide. Its pathway is amino-acid biosynthesis; L-histidine biosynthesis; L-histidine from 5-phospho-alpha-D-ribose 1-diphosphate: step 3/9. Functionally, catalyzes the hydrolysis of the adenine ring of phosphoribosyl-AMP. The protein is Phosphoribosyl-AMP cyclohydrolase of Paracidovorax citrulli (strain AAC00-1) (Acidovorax citrulli).